A 302-amino-acid chain; its full sequence is Glycine--tRNA ligase alpha subunit (302 aa).

This sequence belongs to the class-II aminoacyl-tRNA synthetase family. In terms of assembly, tetramer of two alpha and two beta subunits.

It localises to the cytoplasm. The enzyme catalyses tRNA(Gly) + glycine + ATP = glycyl-tRNA(Gly) + AMP + diphosphate. This chain is Glycine--tRNA ligase alpha subunit, found in Haemophilus influenzae (strain PittGG).